Here is a 603-residue protein sequence, read N- to C-terminus: UvrABC system protein C (603 aa).

In terms of domain architecture, GIY-YIG spans 15 to 92; sequence DQPGCYLMKN…IQKHQPYYNI (78 aa). In terms of domain architecture, UVR spans 197–232; that stretch reads AQVKKQLTARMERAAGQLEFERAAEIRDQLHYIEVT.

Belongs to the UvrC family. As to quaternary structure, interacts with UvrB in an incision complex.

It localises to the cytoplasm. The UvrABC repair system catalyzes the recognition and processing of DNA lesions. UvrC both incises the 5' and 3' sides of the lesion. The N-terminal half is responsible for the 3' incision and the C-terminal half is responsible for the 5' incision. The sequence is that of UvrABC system protein C from Limosilactobacillus fermentum (strain NBRC 3956 / LMG 18251) (Lactobacillus fermentum).